The primary structure comprises 1946 residues: Integrin beta-like protein E (1946 aa).

The first 22 residues, 1-22 (MNNLFKFLFVLLAIFCPPISDL), serve as a signal peptide directing secretion. The Extracellular portion of the chain corresponds to 23–1875 (VVSHGVPQQH…ATTQTTNNKT (1853 aa)). N-linked (GlcNAc...) asparagine glycosylation is found at Asn-107, Asn-134, and Asn-203. Residues 423 to 460 (YGQNCDPTPPCDKGIPNEGILGDGKCMCINGYSGDKCD) form the EGF-like domain. Cystine bridges form between Cys-433–Cys-448 and Cys-450–Cys-459. The region spanning 514-699 (DVFVLVDVNV…AGLKSVLSNV (186 aa)) is the VWFA domain. 18 N-linked (GlcNAc...) asparagine glycosylation sites follow: Asn-705, Asn-860, Asn-1043, Asn-1113, Asn-1177, Asn-1374, Asn-1401, Asn-1513, Asn-1611, Asn-1620, Asn-1662, Asn-1671, Asn-1737, Asn-1743, Asn-1762, Asn-1812, Asn-1852, and Asn-1873. A helical membrane pass occupies residues 1876–1896 (VLTGAIAGAAAGTALIAAAAW). Topologically, residues 1897 to 1946 (KLLRKAAPPTDTFFSEAAFLGDGVNANPLYEQSASAAENPLYQSASDNTD) are cytoplasmic.

This sequence belongs to the SIB family. Interacts with talA/talin.

It localises to the membrane. Implicated in cellular adhesion. In Dictyostelium discoideum (Social amoeba), this protein is Integrin beta-like protein E (sibE).